Here is a 110-residue protein sequence, read N- to C-terminus: UPF0060 membrane protein BTH_I2792 (110 aa).

4 helical membrane-spanning segments follow: residues Ala9–Leu29, Pro34–Leu54, Ala64–Val84, and Leu86–Leu106.

This sequence belongs to the UPF0060 family.

It localises to the cell inner membrane. This is UPF0060 membrane protein BTH_I2792 from Burkholderia thailandensis (strain ATCC 700388 / DSM 13276 / CCUG 48851 / CIP 106301 / E264).